A 156-amino-acid chain; its full sequence is Small ribosomal subunit protein uS7 (156 aa).

It belongs to the universal ribosomal protein uS7 family. In terms of assembly, part of the 30S ribosomal subunit. Contacts proteins S9 and S11.

Its function is as follows. One of the primary rRNA binding proteins, it binds directly to 16S rRNA where it nucleates assembly of the head domain of the 30S subunit. Is located at the subunit interface close to the decoding center, probably blocks exit of the E-site tRNA. This Dechloromonas aromatica (strain RCB) protein is Small ribosomal subunit protein uS7.